The primary structure comprises 410 residues: MEAYIRQKRATPGMVQASDMQLVRPMSAVNRNGREVHAYDGPMQFMMSPNNPDQILTSTGNASVTTTPTSPYSDAPLEKLTPSSQDSEDEESTPVDILPSSNSFDSTRHSADHLLTHSAPISPALMNNNGGSHHDSSSGKSVEHSSPQASGHNDTEGDVVGPIEQWVTQPAPQGVLYKCRITRDRKGMDRGLFPIYYLHLERDYGKKVFCLAGRKRKKSKTSNYIISCDPTDLSRQADGFVGKLRSNVFGTTFFVYDSGKKEDHGNPRLDLAVVIYDTNILGFKGPRNMTVLLPGMTEDDQRVKISSADSQQGLLDSWKSKNMDNVVELHNKTPIWNDETQSYVLNFHGRVTQASVKNFQLVHDSDPDYIVMQFGRTSDDIFTMDFRYPLCAFQAFAIALSSFDGKLACE.

Disordered stretches follow at residues 44 to 109 (QFMM…STRH) and 121 to 159 (ISPA…EGDV). A compositionally biased stretch (polar residues) spans 47–72 (MSPNNPDQILTSTGNASVTTTPTSPY). Basic and acidic residues predominate over residues 132–143 (SHHDSSSGKSVE).

This sequence belongs to the TUB family.

The protein resides in the cytoplasm. It localises to the nucleus. In Aedes aegypti (Yellowfever mosquito), this protein is Protein king tubby 1 (king-tubby1).